The chain runs to 238 residues: Large ribosomal subunit protein uL2 (238 aa).

Disordered stretches follow at residues 1 to 34 and 197 to 238; these read MGKR…PPLS and VDHP…RRKR. Over residues 224–238 the composition is skewed to basic residues; sequence KVGHIAARRTGRRKR.

This sequence belongs to the universal ribosomal protein uL2 family. Part of the 50S ribosomal subunit. Forms a bridge to the 30S subunit in the 70S ribosome.

Functionally, one of the primary rRNA binding proteins. Required for association of the 30S and 50S subunits to form the 70S ribosome, for tRNA binding and peptide bond formation. It has been suggested to have peptidyltransferase activity; this is somewhat controversial. Makes several contacts with the 16S rRNA in the 70S ribosome. The protein is Large ribosomal subunit protein uL2 of Aeropyrum pernix (strain ATCC 700893 / DSM 11879 / JCM 9820 / NBRC 100138 / K1).